The following is a 162-amino-acid chain: Caveolin-2 (162 aa).

Residues methionine 1–lysine 86 are Cytoplasmic-facing. At tyrosine 19 the chain carries Phosphotyrosine; by SRC. Serine 20 and serine 23 each carry phosphoserine. The residue at position 27 (tyrosine 27) is a Phosphotyrosine; by SRC. A Phosphoserine modification is found at serine 36. Positions phenylalanine 87–leucine 107 form an intramembrane region, helical. Topologically, residues serine 108–aspartate 162 are cytoplasmic.

It belongs to the caveolin family. In terms of assembly, monomer or homodimer. Interacts with CAV1; the interaction forms a stable heterooligomeric complex that is required for targeting to lipid rafts and for caveolae formation. Tyrosine phosphorylated forms do not form heterooligomers with the Tyr-19-phosphorylated form existing as a monomer or dimer, and the Tyr-27-form as a monomer only. Interacts (tyrosine phosphorylated form) with the SH2 domain-containing proteins, RASA1, NCK1 and SRC. Interacts (tyrosine phosphorylated form) with INSR, the interaction (Tyr-27-phosphorylated form) is increased on insulin stimulation. Interacts (Tyr-19 phosphorylated form) with MAPK1 (phosphorylated form); the interaction, promoted by insulin, leads to nuclear location and MAPK1 activation. Interacts with STAT3; the interaction is increased on insulin-induced tyrosine phosphorylation leading to STAT activation. In terms of processing, phosphorylated on serine and tyrosine residues. CAV1 promotes phosphorylation on Ser-23 which then targets the complex to the plasma membrane, lipid rafts and caveolae. Phosphorylation on Ser-36 appears to modulate mitosis in endothelial cells. Phosphorylation on both Tyr-19 and Tyr-27 is required for insulin-induced 'Ser-727' phosphorylation of STAT3 and its activation. Phosphorylation on Tyr-19 is required for insulin-induced phosphorylation of MAPK1 and DNA binding of STAT3. Tyrosine phosphorylation is induced by both EGF and insulin (By. similarity).

It is found in the nucleus. The protein resides in the cytoplasm. The protein localises to the golgi apparatus membrane. Its subcellular location is the cell membrane. It localises to the membrane. It is found in the caveola. May act as a scaffolding protein within caveolar membranes. Interacts directly with G-protein alpha subunits and can functionally regulate their activity. Acts as an accessory protein in conjunction with CAV1 in targeting to lipid rafts and driving caveolae formation. The Ser-36 phosphorylated form has a role in modulating mitosis in endothelial cells. Positive regulator of cellular mitogenesis of the MAPK signaling pathway. Required for the insulin-stimulated nuclear translocation and activation of MAPK1 and STAT3, and the subsequent regulation of cell cycle progression. This is Caveolin-2 (CAV2) from Chlorocebus aethiops (Green monkey).